The chain runs to 209 residues: Na(+)-translocating NADH-quinone reductase subunit D (209 aa).

Transmembrane regions (helical) follow at residues 42 to 62 (LVMT…ISLI), 66 to 86 (IPGS…VIVV), 103 to 123 (VFVG…AYAM), 131 to 151 (FMDG…VGFL), and 178 to 198 (NGLF…IWGL).

This sequence belongs to the NqrDE/RnfAE family. In terms of assembly, composed of six subunits; NqrA, NqrB, NqrC, NqrD, NqrE and NqrF.

Its subcellular location is the cell inner membrane. The enzyme catalyses a ubiquinone + n Na(+)(in) + NADH + H(+) = a ubiquinol + n Na(+)(out) + NAD(+). NQR complex catalyzes the reduction of ubiquinone-1 to ubiquinol by two successive reactions, coupled with the transport of Na(+) ions from the cytoplasm to the periplasm. NqrA to NqrE are probably involved in the second step, the conversion of ubisemiquinone to ubiquinol. This Proteus mirabilis (strain HI4320) protein is Na(+)-translocating NADH-quinone reductase subunit D.